We begin with the raw amino-acid sequence, 308 residues long: FGSLLGICLVTQIITGLLLATHYTADTNLAFASVAHTCRNVQFGWLIRNLHANGASFFFICIYLHIGRGIYYGSYLNKETWNTGVILLLTLMATAFVGYVLPWGQMSFWGATVITNLFSAIPYIGQTLVEWAWGGFSVDNPTLTRFFALHFLLPFVIAGITLVHLTFLHETGSNNPLGIPSDCDKIPFHPYYSMKDILGFALLFIALVAMALFSPNLLGDPENFTPANPLSTPPHIKPEWYFLFAYAILRSIPNKLGGVLALAASVLVLFLIPLLHTSKQRSMTFRPLSQILFWTLVANLLVLTWVGS.

The next 4 membrane-spanning stretches (helical) occupy residues 1–21, 45–66, 81–101, and 146–166; these read FGSL…LLAT, WLIR…YLHI, WNTG…GYVL, and FFAL…VHLT. Positions 51 and 65 each coordinate heme b. Residues His150 and His164 each coordinate heme b. His169 provides a ligand contact to a ubiquinone. 3 consecutive transmembrane segments (helical) span residues 194–214, 256–276, and 288–308; these read MKDI…ALFS, LGGV…PLLH, and LSQI…WVGS.

Belongs to the cytochrome b family. In terms of assembly, the cytochrome bc1 complex contains 11 subunits: 3 respiratory subunits (MT-CYB, CYC1 and UQCRFS1), 2 core proteins (UQCRC1 and UQCRC2) and 6 low-molecular weight proteins (UQCRH/QCR6, UQCRB/QCR7, UQCRQ/QCR8, UQCR10/QCR9, UQCR11/QCR10 and a cleavage product of UQCRFS1). This cytochrome bc1 complex then forms a dimer. It depends on heme b as a cofactor.

It is found in the mitochondrion inner membrane. Its function is as follows. Component of the ubiquinol-cytochrome c reductase complex (complex III or cytochrome b-c1 complex) that is part of the mitochondrial respiratory chain. The b-c1 complex mediates electron transfer from ubiquinol to cytochrome c. Contributes to the generation of a proton gradient across the mitochondrial membrane that is then used for ATP synthesis. The sequence is that of Cytochrome b (MT-CYB) from Amblyornis macgregoriae (Macgregor's bowerbird).